The following is a 394-amino-acid chain: Flagellin B (394 aa).

Belongs to the bacterial flagellin family.

Its subcellular location is the secreted. The protein localises to the bacterial flagellum. In terms of biological role, flagellin is the subunit protein which polymerizes to form the filaments of bacterial flagella. The sequence is that of Flagellin B (flaB) from Rhizobium meliloti (strain 1021) (Ensifer meliloti).